A 210-amino-acid chain; its full sequence is Glutathione S-transferase P 2 (210 aa).

In terms of domain architecture, GST N-terminal spans 1–82 (SGYTLTYFPL…LLARYGLSGS (82 aa)). Glutathione is bound by residues tyrosine 7, arginine 13, tryptophan 38, lysine 46, 53–54 (QI), and 66–67 (QS). In terms of domain architecture, GST C-terminal spans 83–204 (NEREIAINEM…KSEGRKRRPI (122 aa)).

This sequence belongs to the GST superfamily. Pi family. Homodimer. In terms of tissue distribution, liver, kidney, muscle, skin, lung and ovary.

It carries out the reaction RX + glutathione = an S-substituted glutathione + a halide anion + H(+). Conjugation of reduced glutathione to a wide number of exogenous and endogenous hydrophobic electrophiles. This chain is Glutathione S-transferase P 2, found in Bufo bufo (European toad).